The chain runs to 768 residues: Dual specificity calcium/calmodulin-dependent 3',5'-cyclic nucleotide phosphodiesterase 1C (768 aa).

Residue Met-1 is modified to N-acetylmethionine. A calmodulin-binding region spans residues 183 to 206 (EKPRFKSIVHAVQAGIFVERMYRR). In terms of domain architecture, PDEase spans 211–588 (VGLSYPPAVI…ERWRAKVPKE (378 aa)). Catalysis depends on His-288, which acts as the Proton donor. Zn(2+)-binding residues include His-292, His-328, Asp-329, and Asp-436. A Mg(2+)-binding site is contributed by Asp-329. 2 disordered regions span residues 513–557 (LIDE…INNS) and 584–719 (KVPK…PPLR). Composition is skewed to polar residues over residues 516 to 536 (ETSQ…INSS) and 543 to 557 (VKSS…INNS). Positions 584–614 (KVPKEEKAKKEAEEKARLAAEEKQKEMEAKS) are enriched in basic and acidic residues. A compositionally biased stretch (polar residues) spans 631–641 (ETKGQVNGTRT). Composition is skewed to basic and acidic residues over residues 642 to 659 (SKGD…KAGE) and 665 to 692 (DLKD…DGTK). A compositionally biased stretch (low complexity) spans 698–712 (SPAPSTSSTSRLTLP).

It belongs to the cyclic nucleotide phosphodiesterase family. PDE1 subfamily. In terms of assembly, homodimer. Zn(2+) serves as cofactor. Requires Mg(2+) as cofactor. Highly expressed in olfactory epithelium and at moderate levels, in cerebellum, as well as weakly in forebrain, testis, heart and lung. In the olfactory epithelium, expressed by sensory neurons, but not epithelial cells.

The protein localises to the lysosome. The enzyme catalyses a nucleoside 3',5'-cyclic phosphate + H2O = a nucleoside 5'-phosphate + H(+). The catalysed reaction is 3',5'-cyclic GMP + H2O = GMP + H(+). It carries out the reaction 3',5'-cyclic AMP + H2O = AMP + H(+). Type I PDE are activated by the binding of calmodulin in the presence of Ca(2+). Its function is as follows. Calmodulin-dependent cyclic nucleotide phosphodiesterase with a dual specificity for the second messengers cAMP and cGMP, which are key regulators of many important physiological processes. Has a high affinity for both cAMP and cGMP. Modulates the amplitude and duration of the cAMP signal in sensory cilia in response to odorant stimulation, hence contributing to the generation of action potentials. Regulates smooth muscle cell proliferation. Regulates the stability of growth factor receptors, including PDGFRB. This is Dual specificity calcium/calmodulin-dependent 3',5'-cyclic nucleotide phosphodiesterase 1C from Rattus norvegicus (Rat).